The sequence spans 121 residues: MALTNEEILNAVAEKTVLELVELISAFEEKFNVSAAAVAVAAGPAAAAVEEQTEFNVELTSFGANKVAVIKAVREATGLGLKEAKDLVEGAPQVLKEGISKEEGEELKKKLEEAGATVTLK.

This sequence belongs to the bacterial ribosomal protein bL12 family. In terms of assembly, homodimer. Part of the ribosomal stalk of the 50S ribosomal subunit. Forms a multimeric L10(L12)X complex, where L10 forms an elongated spine to which 2 to 4 L12 dimers bind in a sequential fashion. Binds GTP-bound translation factors.

Forms part of the ribosomal stalk which helps the ribosome interact with GTP-bound translation factors. Is thus essential for accurate translation. In Acinetobacter baylyi (strain ATCC 33305 / BD413 / ADP1), this protein is Large ribosomal subunit protein bL12.